The primary structure comprises 101 residues: Small ribosomal subunit protein uS14 (101 aa).

The protein belongs to the universal ribosomal protein uS14 family. As to quaternary structure, part of the 30S ribosomal subunit. Contacts proteins S3 and S10.

Functionally, binds 16S rRNA, required for the assembly of 30S particles and may also be responsible for determining the conformation of the 16S rRNA at the A site. The chain is Small ribosomal subunit protein uS14 from Shewanella denitrificans (strain OS217 / ATCC BAA-1090 / DSM 15013).